The primary structure comprises 374 residues: Secondary metabolism regulator laeA (374 aa).

Positions 1 to 75 (MFEMGPVGTR…NRNGSPSMSP (75 aa)) are disordered. Over residues 23 to 40 (SYHSPTSSDRGRSRQNSD) the composition is skewed to polar residues. Methionine 207 bears the S-methylmethionine mark.

This sequence belongs to the methyltransferase superfamily. LaeA methyltransferase family. As to quaternary structure, component of the heterotrimeric velvet complex composed of laeA, veA and velB; VeA acting as a bridging protein between laeA and velB. Self-methylates at Met-207.

Its subcellular location is the nucleus. The catalysed reaction is L-methionyl-[protein] + S-adenosyl-L-methionine = S-methyl-L-methionyl-[protein] + S-adenosyl-L-homocysteine. In terms of biological role, methyltransferase that performs automethylation at Met-207. No other methyl-accepting substrate has been identified yet. Component of the velvet transcription factor complex that acts as a global regulator for secondary metabolite gene expression. Controls the expression of the sterigmatocystin, penicillin, and lovastatin gene clusters. Controls light-dependent formation of the velB-vosA complex, veA protein modification, and is required for light-mediated inhibition of sexual development. Within the velvet complex, controls light-dependent secondary metabolism. Involved in the defense response against Drosophila melanogaster larval grazing. In Emericella nidulans (Aspergillus nidulans), this protein is Secondary metabolism regulator laeA.